Reading from the N-terminus, the 138-residue chain is uncharacterized protein (138 aa).

Residues 19 to 40 (ECKVSVISFFLLAFLLMAHIWL) form a helical membrane-spanning segment. Repeat copies occupy residues 94 to 106 (KGEI…KKEG), 107 to 119 (KGEI…KKEG), and 120 to 132 (KGEI…KKEV). Residues 94 to 132 (KGEIEGKEEKKEGKGEIEGKEEKKEGKGEIEGKEEKKEV) are 3 X 13 AA tandem repeats of K-G-E-I-E-G-K-E-E-K-K-E-[GV]. Positions 98 to 138 (EGKEEKKEGKGEIEGKEEKKEGKGEIEGKEEKKEVENGPRK) are disordered.

Expressed in roots, leaves and flowers.

The protein localises to the mitochondrion membrane. Its function is as follows. Involved in cytoplasmic male sterility (CMS) by leading to pollen abortion. Not expressed in fertile (normal) plants. This is an uncharacterized protein from Raphanus sativus (Radish).